The chain runs to 219 residues: Sugar transporter SWEET1 (219 aa).

A run of 7 helical transmembrane segments spans residues 3–23 (FLQL…TTGL), 38–58 (VQFL…YYGL), 63–83 (GTVI…IATY), 98–118 (LLMV…ISPG), 125–145 (LGLT…ADLL), 156–176 (LSFS…LYGL), and 189–209 (PGIF…AVIP). The MtN3/slv 1 domain maps to 5 to 90 (QLLSCACIIF…ATYCHYTKEK (86 aa)). A MtN3/slv 2 domain is found at 124–204 (QLGLTCSVFT…LIRFFLFWWF (81 aa)).

It belongs to the SWEET sugar transporter family.

It localises to the golgi apparatus membrane. It is found in the cell membrane. Mediates sugar transport across membranes. In Danio rerio (Zebrafish), this protein is Sugar transporter SWEET1 (slc50a1).